Reading from the N-terminus, the 380-residue chain is Putative heat stress transcription factor B-4a (380 aa).

The segment at 216–245 is hydrophobic repeat HR-A/B; it reads LLRGNAALVQELAHMRKLYSDIIYFVQNHV. 2 disordered regions span residues 268–296 and 314–380; these read PAGG…TVAE and INEV…VSPP. Low complexity predominate over residues 278–296; the sequence is VRGASGRSATSSSSLTVAE. Residues 346 to 348 carry the Nuclear localization signal motif; sequence RKR.

This sequence belongs to the HSF family. Class B subfamily. As to quaternary structure, homotrimer. Exhibits temperature-dependent phosphorylation.

It localises to the nucleus. In terms of biological role, transcriptional regulator that specifically binds DNA of heat shock promoter elements (HSE). This is Putative heat stress transcription factor B-4a (HSFB4A) from Oryza sativa subsp. japonica (Rice).